Reading from the N-terminus, the 109-residue chain is Red pigment-concentrating prohormone (109 aa).

An N-terminal signal peptide occupies residues 1–25; sequence MVRRSGVTLLVVALLVVTLMSSVSA. Glutamine 26 is modified (pyrrolidone carboxylic acid). At tryptophan 33 the chain carries Tryptophan amide. Positions 34-78 are disordered; that stretch reads GKRAAGASGSNGGVGEAVSGLHPSVGGAPGGVVPPGSSSPGDSCG. Low complexity-rich tracts occupy residues 49-59 and 67-78; these read EAVSGLHPSVG and PPGSSSPGDSCG.

It belongs to the AKH/HRTH/RPCH family.

It is found in the secreted. Functionally, this hormone adapts the animal to light backgrounds by stimulating concentration of the pigment of its red body-chromatophores. In Callinectes sapidus (Blue crab), this protein is Red pigment-concentrating prohormone.